Here is a 914-residue protein sequence, read N- to C-terminus: DNA mismatch repair protein MutS (914 aa).

A disordered region spans residues 28-74; that stretch reads NTNSVKDSNLNDEELSKNAELRPRKRKKSVLLQNSVGEQTEDFSNDE. 726–733 lines the ATP pocket; the sequence is GPNASGKS.

It belongs to the DNA mismatch repair MutS family.

Functionally, this protein is involved in the repair of mismatches in DNA. It is possible that it carries out the mismatch recognition step. This protein has a weak ATPase activity. This Prochlorococcus marinus (strain SARG / CCMP1375 / SS120) protein is DNA mismatch repair protein MutS.